Consider the following 228-residue polypeptide: Phosphoglycolate phosphatase (228 aa).

D9 serves as the catalytic Nucleophile. Residues D9 and D11 each coordinate Mg(2+). K151 is a substrate binding site. D174 and D178 together coordinate Mg(2+).

This sequence belongs to the archaeal SPP-like hydrolase family. Mg(2+) serves as cofactor.

It catalyses the reaction 2-phosphoglycolate + H2O = glycolate + phosphate. In terms of biological role, catalyzes the dephosphorylation of 2-phosphoglycolate. The protein is Phosphoglycolate phosphatase of Pyrobaculum neutrophilum (strain DSM 2338 / JCM 9278 / NBRC 100436 / V24Sta) (Thermoproteus neutrophilus).